The primary structure comprises 110 residues: Protein RALF-like 19 (110 aa).

The signal sequence occupies residues M1 to A23. Positions T24 to A58 are cleaved as a propeptide — removed in mature form. 2 disulfide bridges follow: C76–C86 and C99–C105.

The protein belongs to the plant rapid alkalinization factor (RALF) family. Proteolytically cleaved, probably by S1P, a subtilisin-like serine protease (subtilase).

It localises to the secreted. Cell signaling peptide that may regulate plant stress, growth, and development. Mediates a rapid alkalinization of extracellular space by mediating a transient increase in the cytoplasmic Ca(2+) concentration leading to a calcium-dependent signaling events through a cell surface receptor and a concomitant activation of some intracellular mitogen-activated protein kinases. The protein is Protein RALF-like 19 (RALFL19) of Arabidopsis thaliana (Mouse-ear cress).